The sequence spans 734 residues: Photosystem I P700 chlorophyll a apoprotein A2 (734 aa).

8 consecutive transmembrane segments (helical) span residues 46–69 (IFAS…FHVA), 135–158 (LYTG…LHLQ), 175–199 (LNHH…HVAI), 273–291 (IAHH…GHMY), 330–353 (IHFQ…QHMY), 369–395 (AALY…IFFI), 417–439 (AIKS…LYVH), and 517–535 (FLVH…LILV). The [4Fe-4S] cluster site is built by C559 and C568. Transmembrane regions (helical) follow at residues 575 to 596 (AFYL…YWHW) and 643 to 665 (LSVW…MFLI). H654, M662, and Y670 together coordinate chlorophyll a. Phylloquinone is bound at residue W671. Residues 707–727 (LVGLAHFSVGYIFTYAAFLIA) traverse the membrane as a helical segment.

This sequence belongs to the PsaA/PsaB family. In terms of assembly, the PsaA/B heterodimer binds the P700 chlorophyll special pair and subsequent electron acceptors. PSI consists of a core antenna complex that captures photons, and an electron transfer chain that converts photonic excitation into a charge separation. The eukaryotic PSI reaction center is composed of at least 11 subunits. P700 is a chlorophyll a/chlorophyll a' dimer, A0 is one or more chlorophyll a, A1 is one or both phylloquinones and FX is a shared 4Fe-4S iron-sulfur center. serves as cofactor.

Its subcellular location is the plastid. It is found in the chloroplast thylakoid membrane. It catalyses the reaction reduced [plastocyanin] + hnu + oxidized [2Fe-2S]-[ferredoxin] = oxidized [plastocyanin] + reduced [2Fe-2S]-[ferredoxin]. Functionally, psaA and PsaB bind P700, the primary electron donor of photosystem I (PSI), as well as the electron acceptors A0, A1 and FX. PSI is a plastocyanin-ferredoxin oxidoreductase, converting photonic excitation into a charge separation, which transfers an electron from the donor P700 chlorophyll pair to the spectroscopically characterized acceptors A0, A1, FX, FA and FB in turn. Oxidized P700 is reduced on the lumenal side of the thylakoid membrane by plastocyanin. In Liriodendron tulipifera (Tuliptree), this protein is Photosystem I P700 chlorophyll a apoprotein A2.